We begin with the raw amino-acid sequence, 121 residues long: Ribonuclease P protein component (121 aa).

Belongs to the RnpA family. Consists of a catalytic RNA component (M1 or rnpB) and a protein subunit.

The enzyme catalyses Endonucleolytic cleavage of RNA, removing 5'-extranucleotides from tRNA precursor.. Functionally, RNaseP catalyzes the removal of the 5'-leader sequence from pre-tRNA to produce the mature 5'-terminus. It can also cleave other RNA substrates such as 4.5S RNA. The protein component plays an auxiliary but essential role in vivo by binding to the 5'-leader sequence and broadening the substrate specificity of the ribozyme. This is Ribonuclease P protein component from Oceanobacillus iheyensis (strain DSM 14371 / CIP 107618 / JCM 11309 / KCTC 3954 / HTE831).